A 478-amino-acid chain; its full sequence is PRAME family member 11 (478 aa).

One copy of the LRR 1; degenerate repeat lies at 99–126; the sequence is RWKLQVLDLQDVCENFWMVWSEAMAHGC. One copy of the LRR 2; degenerate repeat lies at 181 to 205; that stretch reads HLCCKKLKILGMPFRNIRSILKMVN. The stretch at 206–232 is one LRR 3; degenerate repeat; that stretch reads LDCIQEVEVNCKWILPILTQFTPYLGH. One copy of the LRR 4; degenerate repeat lies at 233–268; the sequence is LRNLQKLVLSHMDVSRYVSPEQKKEIVTQFTTQFLK. LRR repeat units follow at residues 269–294, 295–326, 327–347, 351–378, and 379–403; these read LRCLQKLYMNSVSFLEGHLDQLLSCL, KTSLKVLTITNCVLLESDLKHLSQCPSISQLK, TLDLSGIRLTNYSLVPLQILL, AATLEYLDLDDCGIIDSQVNAILPALSR, and CFELNTFSFCGNPICMATLENLLSH.

The protein belongs to the PRAME family.

The protein is PRAME family member 11 of Homo sapiens (Human).